A 426-amino-acid polypeptide reads, in one-letter code: Serine--tRNA ligase (426 aa).

L-serine is bound at residue 229-231 (TAE). ATP contacts are provided by residues 260 to 262 (RKE) and V276. Residue E283 coordinates L-serine. ATP is bound at residue 349–352 (EVTS). T384 serves as a coordination point for L-serine.

It belongs to the class-II aminoacyl-tRNA synthetase family. Type-1 seryl-tRNA synthetase subfamily. As to quaternary structure, homodimer. The tRNA molecule binds across the dimer.

It is found in the cytoplasm. It carries out the reaction tRNA(Ser) + L-serine + ATP = L-seryl-tRNA(Ser) + AMP + diphosphate + H(+). The catalysed reaction is tRNA(Sec) + L-serine + ATP = L-seryl-tRNA(Sec) + AMP + diphosphate + H(+). It participates in aminoacyl-tRNA biosynthesis; selenocysteinyl-tRNA(Sec) biosynthesis; L-seryl-tRNA(Sec) from L-serine and tRNA(Sec): step 1/1. Catalyzes the attachment of serine to tRNA(Ser). Is also able to aminoacylate tRNA(Sec) with serine, to form the misacylated tRNA L-seryl-tRNA(Sec), which will be further converted into selenocysteinyl-tRNA(Sec). The polypeptide is Serine--tRNA ligase (Treponema pallidum (strain Nichols)).